Reading from the N-terminus, the 330-residue chain is Src kinase-associated phosphoprotein 2-A (330 aa).

Residues 53-77 (QDFQDKAETDDQEENDGFSLPPDAV) are disordered. The PH domain occupies 105–208 (DYLRAGYLEK…WINVIMNARG (104 aa)). Residues 228–261 (SHEEDIYEELPEESEKPVTGSETPKATPVPVNNT) are disordered. A compositionally biased stretch (polar residues) spans 247–261 (GSETPKATPVPVNNT). Positions 268 to 329 (DYANFYRGLW…PKAYIIEMYD (62 aa)) constitute an SH3 domain.

The protein belongs to the SKAP family. In terms of processing, phosphorylated on tyrosines.

Its subcellular location is the cytoplasm. In terms of biological role, may be involved in B-cell and macrophage adhesion processes. May play a role in src signaling pathway. This chain is Src kinase-associated phosphoprotein 2-A (skap2-a), found in Xenopus laevis (African clawed frog).